The chain runs to 145 residues: Large-conductance mechanosensitive channel (145 aa).

The next 3 membrane-spanning stretches (helical) occupy residues 10–30 (FALK…GAFA), 41–61 (IMPI…MFLI), and 87–107 (GNFI…FMMV).

The protein belongs to the MscL family. Homopentamer.

It localises to the cell inner membrane. Channel that opens in response to stretch forces in the membrane lipid bilayer. May participate in the regulation of osmotic pressure changes within the cell. The chain is Large-conductance mechanosensitive channel from Psychrobacter arcticus (strain DSM 17307 / VKM B-2377 / 273-4).